The primary structure comprises 368 residues: Glutamate 5-kinase (368 aa).

ATP is bound at residue Lys-9. Substrate contacts are provided by Ser-49, Asp-136, and Asn-148. ATP is bound by residues 168-169 (TD) and 210-216 (TGGMMTK). In terms of domain architecture, PUA spans 275–353 (AGIITIDNGA…ADIENVLGYE (79 aa)).

Belongs to the glutamate 5-kinase family.

Its subcellular location is the cytoplasm. The catalysed reaction is L-glutamate + ATP = L-glutamyl 5-phosphate + ADP. The protein operates within amino-acid biosynthesis; L-proline biosynthesis; L-glutamate 5-semialdehyde from L-glutamate: step 1/2. Its function is as follows. Catalyzes the transfer of a phosphate group to glutamate to form L-glutamate 5-phosphate. This is Glutamate 5-kinase from Haemophilus influenzae (strain PittEE).